We begin with the raw amino-acid sequence, 304 residues long: Mas-related G-protein coupled receptor member A (304 aa).

At 1 to 17 the chain is on the extracellular side; sequence MDKTIPGSFNSRTLIPN. The chain crosses the membrane as a helical span at residues 18 to 38; the sequence is LLIIISGLVGLIGNAMVFWLL. Over 39-46 the chain is Cytoplasmic; that stretch reads GFRLARNA. The helical transmembrane segment at 47 to 67 threads the bilayer; sequence FSVYILNLALADFLFLLCHII. Topologically, residues 68–80 are extracellular; sequence DSTLLLLKFSYPN. The chain crosses the membrane as a helical span at residues 81–101; sequence IIFLPCFNTVMMVPYIAGLSM. Over 102 to 132 the chain is Cytoplasmic; the sequence is LSAISTERCLSVVCPIWYRCRRPKHTSTVMC. Residues 133–153 form a helical membrane-spanning segment; that stretch reads SAIWVLSLLICILNRYFCGFL. Residues 154-167 are Extracellular-facing; that stretch reads DTKYEKDNRCLASN. Residues 168–188 traverse the membrane as a helical segment; sequence FFTAACLIFLFVVLCLSSLAL. Residues 189–211 lie on the Cytoplasmic side of the membrane; sequence LVRLFCGAGRMKLTRLYATIMLT. A helical membrane pass occupies residues 212–232; the sequence is VLVFLLCGLPFGIHWFLLIWI. The Extracellular segment spans residues 233-244; it reads KIDYGKFAYGLY. The chain crosses the membrane as a helical span at residues 245-265; the sequence is LAALVLTAVNSCANPIIYFFV. Residues 266 to 304 are Cytoplasmic-facing; sequence GSFRHQKHQTLKMVLQRALQDTPETAENTVEMSSSKVEP.

Belongs to the G-protein coupled receptor 1 family. Mas subfamily. In terms of tissue distribution, expressed in a subset of IB4-positive small diameter nociceptive dorsal root neurons.

It is found in the cell membrane. In terms of biological role, orphan receptor activated by a subset of RFamide-family neuropeptides such as FLRF-amide and FMRF-amide. Mediates its action by association with G proteins that activate a phosphatidylinositol-calcium second messenger system. Its effect is mediated by G(q) and G(11) proteins. May regulate the function of nociceptive neurons by modulation of pain perception. This Rattus norvegicus (Rat) protein is Mas-related G-protein coupled receptor member A (Mrgpra).